Here is a 114-residue protein sequence, read N- to C-terminus: Probable divalent-cation tolerance protein cutA homolog (114 aa).

The protein belongs to the CutA family. As to quaternary structure, homotrimer.

This chain is Probable divalent-cation tolerance protein cutA homolog, found in Encephalitozoon cuniculi (strain GB-M1) (Microsporidian parasite).